The primary structure comprises 480 residues: Acyl-coenzyme A synthetase ACSM6, mitochondrial (480 aa).

A mitochondrion-targeting transit peptide spans 1–21 (MLGRFQPFSLVRSFRLGFEAC). Residues 226 to 234 (TKGTTGAPK), 366 to 371 (EGYGQT), D453, and R468 contribute to the ATP site.

Belongs to the ATP-dependent AMP-binding enzyme family. As to quaternary structure, monomer. It depends on Mg(2+) as a cofactor. Mn(2+) serves as cofactor.

The protein localises to the mitochondrion. It catalyses the reaction a medium-chain fatty acid + ATP + CoA = a medium-chain fatty acyl-CoA + AMP + diphosphate. In terms of biological role, catalyzes the activation of fatty acids by CoA to produce an acyl-CoA, the first step in fatty acid metabolism. This Homo sapiens (Human) protein is Acyl-coenzyme A synthetase ACSM6, mitochondrial (ACSM6).